The following is a 446-amino-acid chain: Tubulin beta-2 chain (446 aa).

GTP is bound by residues Gln-11, Glu-69, Ser-138, Gly-142, Thr-143, Gly-144, Asn-204, and Asn-226. Mg(2+) is bound at residue Glu-69.

Belongs to the tubulin family. As to quaternary structure, dimer of alpha and beta chains. A typical microtubule is a hollow water-filled tube with an outer diameter of 25 nm and an inner diameter of 15 nM. Alpha-beta heterodimers associate head-to-tail to form protofilaments running lengthwise along the microtubule wall with the beta-tubulin subunit facing the microtubule plus end conferring a structural polarity. Microtubules usually have 13 protofilaments but different protofilament numbers can be found in some organisms and specialized cells. Mg(2+) serves as cofactor.

It is found in the cytoplasm. Its subcellular location is the cytoskeleton. In terms of biological role, tubulin is the major constituent of microtubules, a cylinder consisting of laterally associated linear protofilaments composed of alpha- and beta-tubulin heterodimers. Microtubules grow by the addition of GTP-tubulin dimers to the microtubule end, where a stabilizing cap forms. Below the cap, tubulin dimers are in GDP-bound state, owing to GTPase activity of alpha-tubulin. The polypeptide is Tubulin beta-2 chain (tub2) (Hypocrea rufa (Trichoderma viride)).